The primary structure comprises 467 residues: Serine decarboxylase 2 (467 aa).

His-178 contacts substrate. Position 290 is an N6-(pyridoxal phosphate)lysine (Lys-290).

Belongs to the group II decarboxylase family. Pyridoxal 5'-phosphate serves as cofactor.

It carries out the reaction L-serine + H(+) = ethanolamine + CO2. Its function is as follows. Catalyzes the biosynthesis of ethanolamine from serine. Decarboxylation of free serine is the major source of ethanolamine production in plants and ethanolamine metabolism is crucial for the synthesis of choline, phosphatidylethanolamine (PE) and phosphatidylcholine (PC), and thus for plant growth. The protein is Serine decarboxylase 2 of Oryza sativa subsp. japonica (Rice).